A 116-amino-acid chain; its full sequence is Putative BPES syndrome breakpoint region protein (116 aa).

Seems to be expressed only in testis.

The sequence is that of Putative BPES syndrome breakpoint region protein (BPESC1) from Homo sapiens (Human).